The primary structure comprises 685 residues: Small ribosomal subunit protein mS39 (685 aa).

The transit peptide at Met-1–Arg-10 directs the protein to the mitochondrion. Lys-127 bears the N6-acetyllysine mark. 10 PPR repeats span residues Ile-150–Val-184, Ser-185–Glu-220, Asn-254–Ala-288, Asp-289–Pro-329, Asn-330–Pro-366, Ser-367–Pro-407, Asp-412–Lys-446, Arg-454–Pro-488, His-489–Phe-523, and Pro-572–Pro-606. The interval Leu-663–Lys-685 is disordered. Over residues Ser-676 to Lys-685 the composition is skewed to acidic residues.

The protein belongs to the mitochondrion-specific ribosomal protein mS39 family. As to quaternary structure, component of the mitochondrial ribosome small subunit (28S) which comprises a 12S rRNA and about 30 distinct proteins. Associated with the 12S mitochondrial rRNA (12S mt-rRNA).

It is found in the mitochondrion. Functionally, mitochondrial RNA-binding protein that has a role in mitochondrial translation. The polypeptide is Small ribosomal subunit protein mS39 (Ptcd3) (Mus musculus (Mouse)).